A 429-amino-acid polypeptide reads, in one-letter code: N5-carboxyaminoimidazole ribonucleotide synthase (429 aa).

ATP is bound by residues Lys-117, Lys-157, 194–197 (EERV), Glu-202, and 280–281 (NE). In terms of domain architecture, ATP-grasp spans 121 to 310 (RQRLAAAGVA…QFEQHLRAVL (190 aa)). The tract at residues 406–429 (RASDDAVGVPPACGGRSDEEERRL) is disordered.

It belongs to the PurK/PurT family. Homodimer.

The enzyme catalyses 5-amino-1-(5-phospho-beta-D-ribosyl)imidazole + hydrogencarbonate + ATP = 5-carboxyamino-1-(5-phospho-D-ribosyl)imidazole + ADP + phosphate + 2 H(+). The protein operates within purine metabolism; IMP biosynthesis via de novo pathway; 5-amino-1-(5-phospho-D-ribosyl)imidazole-4-carboxylate from 5-amino-1-(5-phospho-D-ribosyl)imidazole (N5-CAIR route): step 1/2. Its function is as follows. Catalyzes the ATP-dependent conversion of 5-aminoimidazole ribonucleotide (AIR) and HCO(3)(-) to N5-carboxyaminoimidazole ribonucleotide (N5-CAIR). This chain is N5-carboxyaminoimidazole ribonucleotide synthase, found in Mycobacterium bovis (strain ATCC BAA-935 / AF2122/97).